The sequence spans 314 residues: Putative lipoprotein LppW (314 aa).

The N-terminal stretch at 1–22 (MRARPLTLLTALAAVTLVVVAG) is a signal peptide. Residue cysteine 23 is the site of N-palmitoyl cysteine attachment. Residue cysteine 23 is the site of S-diacylglycerol cysteine attachment.

The protein localises to the cell membrane. The polypeptide is Putative lipoprotein LppW (lppW) (Mycobacterium bovis (strain ATCC BAA-935 / AF2122/97)).